Reading from the N-terminus, the 448-residue chain is MSPQTETKASVGFKAGVKEYKLTYYTPDYETKDTDILAAFRVTPQPGVPPEKAGAAVAESSTGTWTTVWTDGFTSLDRYKGRCYHIEPVAGEENQYIAYVAYPLDLFEEGSVTNMFTSIVGNVFGFKALRALRLEDLRIPVAYVKTFQGPPHGIQVERDKLNKYGRPLLGCTIKPKLGLSAKNYGRAVYECLRGGLDFTKDDENVNSQPFMRWRDRFCFCAEALYKAQAETGEIKGHYLNATAGTCEEMIKRAVFARELGVPIVMHDYLTGGFTANTSLAHYCRDNGLLLHXHRAMHAVIDRQKNHGMPFRVLAKALRMSGGDHIHAGTVVGKLEGEREITLGFVDLLRDDFIEKDRSRGIYFTQDWVSLPGVIPVASGGIHVWHMPALTEIFGDDSVLQFGGGTLGHPWGNAPGAVANRVALEACVQARNEGRDLASEGNEIIREAS.

Positions 1-2 (MS) are excised as a propeptide. At Pro-3 the chain carries N-acetylproline. Lys-14 bears the N6,N6,N6-trimethyllysine mark. The substrate site is built by Asn-122 and Thr-172. Lys-174 acts as the Proton acceptor in catalysis. Lys-176 contacts substrate. Positions 200, 202, and 203 each coordinate Mg(2+). Lys-200 carries the post-translational modification N6-carboxylysine. His-293 acts as the Proton acceptor in catalysis. 3 residues coordinate substrate: Arg-294, His-326, and Ser-378.

Belongs to the RuBisCO large chain family. Type I subfamily. In terms of assembly, heterohexadecamer of 8 large chains and 8 small chains; disulfide-linked. The disulfide link is formed within the large subunit homodimers. Mg(2+) is required as a cofactor. The disulfide bond which can form in the large chain dimeric partners within the hexadecamer appears to be associated with oxidative stress and protein turnover.

It localises to the plastid. Its subcellular location is the chloroplast. The catalysed reaction is 2 (2R)-3-phosphoglycerate + 2 H(+) = D-ribulose 1,5-bisphosphate + CO2 + H2O. The enzyme catalyses D-ribulose 1,5-bisphosphate + O2 = 2-phosphoglycolate + (2R)-3-phosphoglycerate + 2 H(+). In terms of biological role, ruBisCO catalyzes two reactions: the carboxylation of D-ribulose 1,5-bisphosphate, the primary event in carbon dioxide fixation, as well as the oxidative fragmentation of the pentose substrate in the photorespiration process. Both reactions occur simultaneously and in competition at the same active site. The sequence is that of Ribulose bisphosphate carboxylase large chain from Dichapetalum crassifolium.